The following is a 223-amino-acid chain: Endonuclease V (223 aa).

Residues D35 and D103 each contribute to the Mg(2+) site.

Belongs to the endonuclease V family. Mg(2+) is required as a cofactor.

Its subcellular location is the cytoplasm. It catalyses the reaction Endonucleolytic cleavage at apurinic or apyrimidinic sites to products with a 5'-phosphate.. DNA repair enzyme involved in the repair of deaminated bases. Selectively cleaves double-stranded DNA at the second phosphodiester bond 3' to a deoxyinosine leaving behind the intact lesion on the nicked DNA. This Shigella dysenteriae serotype 1 (strain Sd197) protein is Endonuclease V.